We begin with the raw amino-acid sequence, 912 residues long: Probable dipeptidyl-aminopeptidase B (912 aa).

2 disordered regions span residues 1 to 30 and 48 to 68; these read MAAE…SNSL and NGST…DYSD. Over 1-92 the chain is Cytoplasmic; sequence MAAEKGGSSD…GGKPVQKKVK (92 aa). 2 stretches are compositionally biased toward basic and acidic residues: residues 7–25 and 54–67; these read GSSD…EYRD and TGPD…RDYS. The chain crosses the membrane as a helical; Signal-anchor for type II membrane protein span at residues 93-113; the sequence is IVLGFLLFLCLSGWSLAFVLF. The Vacuolar portion of the chain corresponds to 114–912; that stretch reads LFGGHESSKT…RAATWVGMSI (799 aa). N-linked (GlcNAc...) asparagine glycans are attached at residues Asn-130, Asn-210, Asn-346, Asn-569, and Asn-656. The active-site Charge relay system is Ser-751. Asn-810 carries an N-linked (GlcNAc...) asparagine glycan. Residues Asp-828 and His-861 each act as charge relay system in the active site. Asn-897 is a glycosylation site (N-linked (GlcNAc...) asparagine).

This sequence belongs to the peptidase S9B family.

It localises to the vacuole membrane. It catalyses the reaction Release of an N-terminal dipeptide, Xaa-Yaa-|-Zaa-, from a polypeptide, preferentially when Yaa is Pro, provided Zaa is neither Pro nor hydroxyproline.. Type IV dipeptidyl-peptidase which removes N-terminal dipeptides sequentially from polypeptides having unsubstituted N-termini provided that the penultimate residue is proline. The sequence is that of Probable dipeptidyl-aminopeptidase B (DAPB) from Paracoccidioides brasiliensis (strain Pb18).